Consider the following 894-residue polypeptide: MSEEITTNQTVEEEQQTNQPRLSNENIKQEDEEQQVQEQQEQQQQEQQEQIDDQDTQQQEDEFVVLEETKPVEPIRPTPTLQETPQQQKQQTQEQEHEYQDIVQFIDHKGDIVKEDNKNGRTTFLSTLSNRDDFLTKGFDYSVISILGPQSSGKSTLLNLLFNTRFAVMDASTGRKQTTQGVWMGVASTTNNKNETFLILDVEGTDGRERGEDEKAFERKTSLFSLALSSVLIINMWAHDIGRYNAANISLLKTVFELNLQLFQKKRNHKILIFFLIRDHDGVTPLERLKATLMEDITKLWTDLQKPEEFVGTRESDFFDFEFTTLPHKIYSPTAFLGQVEQLKQRFSDSGADSFIPKRKYRNDDIPADGFYQFSYQVWETIKSNRDLDLPSQKEMLALYRCDEFVEQSMTQFTRDIKPIKEHIERGRIQEQFGEKSKRILDQSLSVYDEPAQRYHLETVQKKRQVLTDRILTELKYLFDKQMERLNENTLVFYNSLIKEFTDSNTGSSSGSGNNNNKKRDGSSVLLTAASVGIIPQFSTWSNGIKKKSIEYFEIVANQSIVPGSDWSFENDLEQLKIKIDKELSILKENQLVRLSKLMRDKTFQQELTPLLTKITEQAPNNMWQKIKTYYDDALSSNEKEFRDRLVDFQLDEQKVNELINKFREQLADGLKNKITERAEFLQMRMRKRFEEKFNMDNRNLPRKWTKTDDIASIFQDARQNAEKLIDLFSYLRLDEEDSNVSFFKRLDNDEHEENTMVNSSKIIIPYKDCCLACENFRLTIKSDYMQALSEQNRLTSGGGVPGYMIILLCVLGFNEFISIISSPLLLLLTILLGGVGFVLFKLGLAGPFIDYSSQILVHFISKVKDIVLHVEQLQEQNHNNNNNNNNTPKQKRE.

2 stretches are compositionally biased toward low complexity: residues 1-10 (MSEEITTNQT) and 36-48 (VQEQ…QEQQ). Residues 1 to 97 (MSEEITTNQT…QKQQTQEQEH (97 aa)) form a disordered region. Residues 1 to 800 (MSEEITTNQT…EQNRLTSGGG (800 aa)) are Cytoplasmic-facing. A coiled-coil region spans residues 21-60 (RLSNENIKQEDEEQQVQEQQEQQQQEQQEQIDDQDTQQQE). Over residues 49 to 65 (EQIDDQDTQQQEDEFVV) the composition is skewed to acidic residues. The span at 78-93 (TPTLQETPQQQKQQTQ) shows a compositional bias: low complexity. A GB1/RHD3-type G domain is found at 138–361 (GFDYSVISIL…ADSFIPKRKY (224 aa)). 148–155 (GPQSSGKS) provides a ligand contact to GTP. The chain crosses the membrane as a helical span at residues 801 to 821 (VPGYMIILLCVLGFNEFISII). Residues 822–824 (SSP) are Lumenal-facing. A helical membrane pass occupies residues 825 to 845 (LLLLLTILLGGVGFVLFKLGL). Over 846–894 (AGPFIDYSSQILVHFISKVKDIVLHVEQLQEQNHNNNNNNNNTPKQKRE) the chain is Cytoplasmic.

Belongs to the TRAFAC class dynamin-like GTPase superfamily. GB1/RHD3 GTPase family. RHD3 subfamily.

The protein resides in the endoplasmic reticulum membrane. Its function is as follows. Probable GTP-binding protein that may be involved in cell development. This Dictyostelium discoideum (Social amoeba) protein is Protein SEY1 homolog.